A 461-amino-acid polypeptide reads, in one-letter code: Coronin-1A (461 aa).

S2 bears the N-acetylserine mark. Phosphoserine; by PKC is present on S2. WD repeat units follow at residues 13-63 (HVFG…LVLP), 73-110 (NVPLVCGHTAPVLDIAWCPHNDNVIASGSEDCTVMVWE), 123-160 (PVITLEGHTKRVGIVAWHPTAQNVLLSAGCDNVILVWD), 164-204 (GAAV…RVIE), 207-251 (KGTV…ALWD), 258-296 (PLSLQELDTSSGVLLPFFDPDTNIVYLCGKGDSSIRYFE), and 302-349 (PFLH…EPIA). Residues 403–418 (ELRVNRGLDSARRRAT) show a composition bias toward basic and acidic residues. The interval 403–434 (ELRVNRGLDSARRRATPEPSGTPSSDTVSRLE) is disordered. At S412 the chain carries Phosphoserine; by PKC. T418 carries the post-translational modification Phosphothreonine. The span at 421-430 (PSGTPSSDTV) shows a compositional bias: polar residues. Position 422 is a phosphoserine (S422). Residues 424 to 461 (TPSSDTVSRLEEDVRNLNAIVQKLQERLDRLEETVQAK) adopt a coiled-coil conformation.

This sequence belongs to the WD repeat coronin family. As to quaternary structure, binds actin. In terms of processing, phosphorylation at Ser-412 by PKC strongly down-regulates the association with actin. Polyubiquitinated by RNF128 with 'Lys-48'-linked chains, leading to proteasomal degradation. In terms of tissue distribution, expressed in spleen, lymph nodes, thymus, brain and at very lower levels in lung. Also expressed in cells of the lymphoid/myeloid lineage. Not expressed in Kuffper cells.

The protein resides in the cytoplasm. It is found in the cytoskeleton. The protein localises to the cell cortex. Its subcellular location is the cytoplasmic vesicle. It localises to the phagosome membrane. Its function is as follows. May be a crucial component of the cytoskeleton of highly motile cells, functioning both in the invagination of large pieces of plasma membrane, as well as in forming protrusions of the plasma membrane involved in cell locomotion. In mycobacteria-infected cells, its retention on the phagosomal membrane prevents fusion between phagosomes and lysosomes. This is Coronin-1A (Coro1a) from Mus musculus (Mouse).